A 158-amino-acid chain; its full sequence is Transcription elongation factor GreA (158 aa).

Positions 5 to 75 form a coiled coil; the sequence is EKLPMLAEGY…DLEDRVSRAQ (71 aa).

Belongs to the GreA/GreB family.

Functionally, necessary for efficient RNA polymerase transcription elongation past template-encoded arresting sites. The arresting sites in DNA have the property of trapping a certain fraction of elongating RNA polymerases that pass through, resulting in locked ternary complexes. Cleavage of the nascent transcript by cleavage factors such as GreA or GreB allows the resumption of elongation from the new 3'terminus. GreA releases sequences of 2 to 3 nucleotides. The protein is Transcription elongation factor GreA of Novosphingobium aromaticivorans (strain ATCC 700278 / DSM 12444 / CCUG 56034 / CIP 105152 / NBRC 16084 / F199).